A 736-amino-acid chain; its full sequence is Elongation factor 2 (736 aa).

Positions 18-261 constitute a tr-type G domain; sequence EQIRNIGITA…MVVKHIPNPR (244 aa). GTP contacts are provided by residues 27 to 34, 93 to 97, and 147 to 150; these read AHVDHGKT, DTPGH, and NKID. His602 is subject to Diphthamide.

It belongs to the TRAFAC class translation factor GTPase superfamily. Classic translation factor GTPase family. EF-G/EF-2 subfamily.

It is found in the cytoplasm. Functionally, catalyzes the GTP-dependent ribosomal translocation step during translation elongation. During this step, the ribosome changes from the pre-translocational (PRE) to the post-translocational (POST) state as the newly formed A-site-bound peptidyl-tRNA and P-site-bound deacylated tRNA move to the P and E sites, respectively. Catalyzes the coordinated movement of the two tRNA molecules, the mRNA and conformational changes in the ribosome. The chain is Elongation factor 2 from Desulfurococcus amylolyticus (strain DSM 18924 / JCM 16383 / VKM B-2413 / 1221n) (Desulfurococcus kamchatkensis).